Here is a 156-residue protein sequence, read N- to C-terminus: Ribosomal RNA large subunit methyltransferase H (156 aa).

Residues Leu73, Gly104, and 123 to 128 contribute to the S-adenosyl-L-methionine site; that span reads LSPLTL.

Belongs to the RNA methyltransferase RlmH family. In terms of assembly, homodimer.

The protein localises to the cytoplasm. The catalysed reaction is pseudouridine(1915) in 23S rRNA + S-adenosyl-L-methionine = N(3)-methylpseudouridine(1915) in 23S rRNA + S-adenosyl-L-homocysteine + H(+). Its function is as follows. Specifically methylates the pseudouridine at position 1915 (m3Psi1915) in 23S rRNA. This chain is Ribosomal RNA large subunit methyltransferase H, found in Aliivibrio salmonicida (strain LFI1238) (Vibrio salmonicida (strain LFI1238)).